We begin with the raw amino-acid sequence, 215 residues long: Redox-sensing transcriptional repressor Rex (215 aa).

Positions 18–57 form a DNA-binding region, H-T-H motif; sequence LYYRFLKNLHASGKQRVSSAELSEAVKVDPATIRRDFSYF. Residue 92–97 coordinates NAD(+); the sequence is GVGNLG.

Belongs to the transcriptional regulatory Rex family. Homodimer.

The protein resides in the cytoplasm. Functionally, modulates transcription in response to changes in cellular NADH/NAD(+) redox state. This is Redox-sensing transcriptional repressor Rex from Geobacillus sp. (strain WCH70).